A 305-amino-acid polypeptide reads, in one-letter code: Heat stress transcription factor B-4d (305 aa).

Residues 201–230 (LRRRNSLLLSELAHMRKLYNDIIYFLQNHV) form a hydrophobic repeat HR-A/B region. Positions 286-289 (KKRR) match the Nuclear localization signal motif. The disordered stretch occupies residues 286 to 305 (KKRRVQLVQEDEGDEQGSEG). Acidic residues predominate over residues 294-305 (QEDEGDEQGSEG).

Belongs to the HSF family. Class B subfamily. Homotrimer. In terms of processing, exhibits temperature-dependent phosphorylation.

It localises to the nucleus. Transcriptional regulator that specifically binds DNA of heat shock promoter elements (HSE). In Oryza sativa subsp. japonica (Rice), this protein is Heat stress transcription factor B-4d (HSFB4D).